A 340-amino-acid polypeptide reads, in one-letter code: Uroporphyrinogen decarboxylase (340 aa).

Residues Arg-23–Arg-27, Asp-72, Tyr-147, Thr-202, and His-316 contribute to the substrate site.

It belongs to the uroporphyrinogen decarboxylase family. Homodimer.

The protein resides in the cytoplasm. The enzyme catalyses uroporphyrinogen III + 4 H(+) = coproporphyrinogen III + 4 CO2. Its pathway is porphyrin-containing compound metabolism; protoporphyrin-IX biosynthesis; coproporphyrinogen-III from 5-aminolevulinate: step 4/4. Its function is as follows. Catalyzes the decarboxylation of four acetate groups of uroporphyrinogen-III to yield coproporphyrinogen-III. In Geobacter sulfurreducens (strain ATCC 51573 / DSM 12127 / PCA), this protein is Uroporphyrinogen decarboxylase.